Here is a 694-residue protein sequence, read N- to C-terminus: Frizzled-2 (694 aa).

The first 22 residues, methionine 1–alanine 22, serve as a signal peptide directing secretion. The Extracellular segment spans residues aspartate 23–aspartate 315. The FZ domain occupies aspartate 59–glutamine 180. 5 cysteine pairs are disulfide-bonded: cysteine 64–cysteine 125, cysteine 72–cysteine 118, cysteine 109–cysteine 147, cysteine 136–cysteine 177, and cysteine 140–cysteine 164. Asparagine 78 carries N-linked (GlcNAc...) asparagine glycosylation. The tract at residues asparagine 175–cysteine 253 is disordered. Residues glycine 187–serine 224 are compositionally biased toward gly residues. N-linked (GlcNAc...) asparagine glycosylation is present at asparagine 288. The helical transmembrane segment at phenylalanine 316–leucine 336 threads the bilayer. The Cytoplasmic segment spans residues threonine 337–proline 352. The chain crosses the membrane as a helical span at residues isoleucine 353–leucine 373. Residues glutamine 374–leucine 397 lie on the Extracellular side of the membrane. A helical membrane pass occupies residues valine 398 to phenylalanine 418. Residues threonine 419–tyrosine 439 lie on the Cytoplasmic side of the membrane. A helical membrane pass occupies residues phenylalanine 440–alanine 460. Residues valine 461–threonine 482 are Extracellular-facing. A helical membrane pass occupies residues phenylalanine 483 to phenylalanine 503. The Cytoplasmic segment spans residues valine 504–arginine 534. A helical membrane pass occupies residues isoleucine 535 to tyrosine 555. Topologically, residues glutamate 556–serine 584 are extracellular. A helical membrane pass occupies residues valine 585–tryptophan 605. Over serine 606 to valine 694 the chain is Cytoplasmic. A Lys-Thr-X-X-X-Trp motif, mediates interaction with the PDZ domain of Dvl family members motif is present at residues lysine 608–tryptophan 613. The PDZ-binding signature appears at serine 692–valine 694.

It belongs to the G-protein coupled receptor Fz/Smo family. Interacts with ATP6AP2.

The protein resides in the cell membrane. Functionally, receptor for Wnt proteins. Most of frizzled receptors are coupled to the beta-catenin canonical signaling pathway, which leads to the activation of disheveled proteins, inhibition of GSK-3 kinase, nuclear accumulation of beta-catenin and activation of Wnt target genes. A second signaling pathway involving PKC and calcium fluxes has been seen for some family members, but it is not yet clear if it represents a distinct pathway or if it can be integrated in the canonical pathway, as PKC seems to be required for Wnt-mediated inactivation of GSK-3 kinase. Both pathways seem to involve interactions with G-proteins. Required to coordinate the cytoskeletons of epidermal cells to produce a parallel array of cuticular hairs and bristles. This chain is Frizzled-2 (fz2), found in Drosophila melanogaster (Fruit fly).